Reading from the N-terminus, the 142-residue chain is MAKKVDGYIKLQVAAGAANPSPPVGPALGQKGVNIMEFCKAFNARTEKFEKGMPIPVVITVYSDRSFTFETKTPPASFLLLKAAGLKSGSGRPNTEKVGTIKRSAVQEIAETKAADMTGADIEAMTRSIEGTARSMGLVVED.

Belongs to the universal ribosomal protein uL11 family. As to quaternary structure, part of the ribosomal stalk of the 50S ribosomal subunit. Interacts with L10 and the large rRNA to form the base of the stalk. L10 forms an elongated spine to which L12 dimers bind in a sequential fashion forming a multimeric L10(L12)X complex. Post-translationally, one or more lysine residues are methylated.

Its function is as follows. Forms part of the ribosomal stalk which helps the ribosome interact with GTP-bound translation factors. The chain is Large ribosomal subunit protein uL11 from Shewanella pealeana (strain ATCC 700345 / ANG-SQ1).